The chain runs to 952 residues: UPF0182 protein SRU_2225 (952 aa).

7 helical membrane-spanning segments follow: residues 12-32, 52-72, 109-129, 168-188, 207-227, 247-267, and 277-297; these read ILLG…GLVV, AQVL…GGNF, LGYV…SGRW, AVVG…VIAG, LGAN…LDLY, VVIP…GLVG, and LLGI…VLAP. A disordered region spans residues 917-952; it reads VPLPDTTGTVPPPTSSDTTGTMTAPTGDVSEVTGGS. The span at 931 to 940 shows a compositional bias: polar residues; sequence SSDTTGTMTA.

This sequence belongs to the UPF0182 family.

The protein resides in the cell membrane. In Salinibacter ruber (strain DSM 13855 / M31), this protein is UPF0182 protein SRU_2225.